The chain runs to 873 residues: DNA helicase/primase complex-associated protein (873 aa).

The interval 394–422 (PPLPRDDGDGENNVVEVSSSTGGAHPPSD) is disordered.

Belongs to the herpesviridae HEPA family. In terms of assembly, associates with the primase and the helicase to form the helicase-primase complex. Interacts with the origin-binding protein. Interacts with the polymerase catalytic subunit.

The protein localises to the host nucleus. In terms of biological role, component of the helicase/primase complex. Unwinds the DNA at the replication forks and generates single-stranded DNA for both leading and lagging strand synthesis. The primase synthesizes short RNA primers on the lagging strand that the polymerase presumably elongates using dNTPs. The primase-associated factor has no known catalytic activity in the complex and may serve to facilitate the formation of the replisome by directly interacting with the origin-binding protein and the polymerase. This Human cytomegalovirus (strain Merlin) (HHV-5) protein is DNA helicase/primase complex-associated protein (UL102).